Reading from the N-terminus, the 666-residue chain is uncharacterized protein (666 aa).

The protein belongs to the MG032/MG096/MG288 family.

This is an uncharacterized protein from Mycoplasma pneumoniae (strain ATCC 29342 / M129 / Subtype 1) (Mycoplasmoides pneumoniae).